A 182-amino-acid chain; its full sequence is Ribosome-recycling factor (182 aa).

A disordered region spans residues V136–E160.

The protein belongs to the RRF family.

Its subcellular location is the cytoplasm. In terms of biological role, responsible for the release of ribosomes from messenger RNA at the termination of protein biosynthesis. May increase the efficiency of translation by recycling ribosomes from one round of translation to another. The polypeptide is Ribosome-recycling factor (Prochlorococcus marinus (strain NATL2A)).